A 161-amino-acid chain; its full sequence is Anaerobic nitrite reductase Glb1-2 (161 aa).

One can recognise a Globin domain in the interval 9-158 (AFTEEQEALV…LASAIIAEMK (150 aa)). The Homodimerization signature appears at 42–46 (EIAPP). S52, K66, H70, K100, T104, and H105 together coordinate heme b. The Homodimerization signature appears at 112–124 (PEHFEVTKQALLD).

This sequence belongs to the plant globin family. Homodimer. Requires heme b as cofactor. As to expression, mainly expressed in root nodules and leaves, and, to a lower extent, in roots, stems, flowers and fruits. Accumulates in mature root nodules.

It carries out the reaction Fe(III)-heme b-[protein] + nitric oxide + H2O = Fe(II)-heme b-[protein] + nitrite + 2 H(+). Its function is as follows. Phytoglobin that reduces nitrite to nitric oxide (NO) under anoxic conditions (e.g. during flooding or in waterlogged soil) and upon root nodulation. Required for general plant development and during nodulation, especially for the onset of symbiosis. Monitors nitric oxide (NO) levels during early phase of the nitrogen-fixing symbiosis and buffers oxygen in functioning nodules. Necessary for the production of pods. May not function as an oxygen storage or transport protein. Has an unusually high affinity for O(2) through a hexacoordinate heme iron because of a very low dissociation constant. The protein is Anaerobic nitrite reductase Glb1-2 of Lotus japonicus (Lotus corniculatus var. japonicus).